We begin with the raw amino-acid sequence, 458 residues long: Dihydrolipoyl dehydrogenase (458 aa).

FAD contacts are provided by residues 30-38 (DKGKLGGTC), K47, and A112. C38 and C43 are joined by a disulfide. NAD(+) contacts are provided by residues 177-181 (GGGVI), E200, and 263-266 (AIGR). FAD contacts are provided by D305 and A313. H437 functions as the Proton acceptor in the catalytic mechanism.

Belongs to the class-I pyridine nucleotide-disulfide oxidoreductase family. As to quaternary structure, homodimer. The cofactor is FAD.

Its subcellular location is the cytoplasm. It carries out the reaction N(6)-[(R)-dihydrolipoyl]-L-lysyl-[protein] + NAD(+) = N(6)-[(R)-lipoyl]-L-lysyl-[protein] + NADH + H(+). It participates in ketone degradation; acetoin degradation. This Bacillus subtilis (strain 168) protein is Dihydrolipoyl dehydrogenase (acoL).